Here is a 533-residue protein sequence, read N- to C-terminus: Probable protein kinase UbiB (533 aa).

The helical transmembrane segment at L24–W44 threads the bilayer. One can recognise a Protein kinase domain in the interval R126 to G494. ATP-binding positions include L132–V140 and K154. Catalysis depends on D289, which acts as the Proton acceptor. A helical transmembrane segment spans residues L510 to I530.

This sequence belongs to the ABC1 family. UbiB subfamily.

The protein localises to the cell inner membrane. It functions in the pathway cofactor biosynthesis; ubiquinone biosynthesis [regulation]. Its function is as follows. Is probably a protein kinase regulator of UbiI activity which is involved in aerobic coenzyme Q (ubiquinone) biosynthesis. This is Probable protein kinase UbiB from Pseudomonas aeruginosa (strain LESB58).